The primary structure comprises 432 residues: Adenylosuccinate synthetase (432 aa).

GTP contacts are provided by residues 12-18 and 40-42; these read GDEGKGK and GHT. Asp13 (proton acceptor) is an active-site residue. The Mg(2+) site is built by Asp13 and Gly40. IMP-binding positions include 13–16, 38–41, Thr129, Arg143, Gln224, Thr239, and Arg303; these read DEGK and NAGH. The active-site Proton donor is His41. 299–305 is a substrate binding site; that stretch reads VTTGRRR. GTP-binding positions include Arg305, 331-333, and 413-415; these read KLD and GVG.

Belongs to the adenylosuccinate synthetase family. Homodimer. Mg(2+) is required as a cofactor.

The protein resides in the cytoplasm. The enzyme catalyses IMP + L-aspartate + GTP = N(6)-(1,2-dicarboxyethyl)-AMP + GDP + phosphate + 2 H(+). Its pathway is purine metabolism; AMP biosynthesis via de novo pathway; AMP from IMP: step 1/2. Plays an important role in the de novo pathway of purine nucleotide biosynthesis. Catalyzes the first committed step in the biosynthesis of AMP from IMP. In Mycobacterium marinum (strain ATCC BAA-535 / M), this protein is Adenylosuccinate synthetase.